The primary structure comprises 396 residues: Phosphoglycerate kinase (396 aa).

Substrate-binding positions include 21–23, arginine 37, 60–63, arginine 121, and arginine 154; these read DFN and HLGR. ATP-binding positions include lysine 205, glycine 296, glutamate 327, and 353-356; that span reads GGDS.

The protein belongs to the phosphoglycerate kinase family. In terms of assembly, monomer.

Its subcellular location is the cytoplasm. The enzyme catalyses (2R)-3-phosphoglycerate + ATP = (2R)-3-phospho-glyceroyl phosphate + ADP. The protein operates within carbohydrate degradation; glycolysis; pyruvate from D-glyceraldehyde 3-phosphate: step 2/5. In Anaeromyxobacter sp. (strain Fw109-5), this protein is Phosphoglycerate kinase.